A 194-amino-acid chain; its full sequence is uncharacterized protein (194 aa).

It to A.aeolicus AQ_423.

This is an uncharacterized protein from Aquifex aeolicus (strain VF5).